Reading from the N-terminus, the 642-residue chain is 4-hydroxy-3-methylbut-2-enyl diphosphate reductase (642 aa).

The tract at residues 1 to 282 (MRKVMLAEKA…EEAISKMSEN (282 aa)) is 4-hydroxy-3-methylbut-2-enyl diphosphate reductase. Cys13 provides a ligand contact to [4Fe-4S] cluster. The (2E)-4-hydroxy-3-methylbut-2-enyl diphosphate site is built by His42 and His77. Positions 42 and 77 each coordinate dimethylallyl diphosphate. Isopentenyl diphosphate-binding residues include His42 and His77. Cys99 contributes to the [4Fe-4S] cluster binding site. (2E)-4-hydroxy-3-methylbut-2-enyl diphosphate is bound at residue His127. A dimethylallyl diphosphate-binding site is contributed by His127. Position 127 (His127) interacts with isopentenyl diphosphate. The active-site Proton donor is Glu129. Thr165 provides a ligand contact to (2E)-4-hydroxy-3-methylbut-2-enyl diphosphate. Cys193 is a binding site for [4Fe-4S] cluster. Positions 221, 222, 223, and 266 each coordinate (2E)-4-hydroxy-3-methylbut-2-enyl diphosphate. Ser221, Ser222, Asn223, and Ser266 together coordinate dimethylallyl diphosphate. Ser221, Ser222, Asn223, and Ser266 together coordinate isopentenyl diphosphate. S1 motif domains lie at 309-377 (GASV…LSVK), 484-552 (GQVV…LSVK), and 569-638 (GSVV…LSIR).

In the N-terminal section; belongs to the IspH family. The cofactor is [4Fe-4S] cluster.

The catalysed reaction is isopentenyl diphosphate + 2 oxidized [2Fe-2S]-[ferredoxin] + H2O = (2E)-4-hydroxy-3-methylbut-2-enyl diphosphate + 2 reduced [2Fe-2S]-[ferredoxin] + 2 H(+). It catalyses the reaction dimethylallyl diphosphate + 2 oxidized [2Fe-2S]-[ferredoxin] + H2O = (2E)-4-hydroxy-3-methylbut-2-enyl diphosphate + 2 reduced [2Fe-2S]-[ferredoxin] + 2 H(+). It participates in isoprenoid biosynthesis; dimethylallyl diphosphate biosynthesis; dimethylallyl diphosphate from (2E)-4-hydroxy-3-methylbutenyl diphosphate: step 1/1. It functions in the pathway isoprenoid biosynthesis; isopentenyl diphosphate biosynthesis via DXP pathway; isopentenyl diphosphate from 1-deoxy-D-xylulose 5-phosphate: step 6/6. Functionally, catalyzes the conversion of 1-hydroxy-2-methyl-2-(E)-butenyl 4-diphosphate (HMBPP) into a mixture of isopentenyl diphosphate (IPP) and dimethylallyl diphosphate (DMAPP). Acts in the terminal step of the DOXP/MEP pathway for isoprenoid precursor biosynthesis. The protein is 4-hydroxy-3-methylbut-2-enyl diphosphate reductase of Clostridium acetobutylicum (strain ATCC 824 / DSM 792 / JCM 1419 / IAM 19013 / LMG 5710 / NBRC 13948 / NRRL B-527 / VKM B-1787 / 2291 / W).